The primary structure comprises 576 residues: Arginine--tRNA ligase (576 aa).

Positions 122–132 (PNVAKEMHVGH) match the 'HIGH' region motif.

This sequence belongs to the class-I aminoacyl-tRNA synthetase family. As to quaternary structure, monomer.

The protein resides in the cytoplasm. It catalyses the reaction tRNA(Arg) + L-arginine + ATP = L-arginyl-tRNA(Arg) + AMP + diphosphate. The protein is Arginine--tRNA ligase of Sodalis glossinidius (strain morsitans).